The following is a 260-amino-acid chain: UPF0246 protein Tola_0968 (260 aa).

It belongs to the UPF0246 family.

The protein is UPF0246 protein Tola_0968 of Tolumonas auensis (strain DSM 9187 / NBRC 110442 / TA 4).